Reading from the N-terminus, the 314-residue chain is R2-like ligand binding oxidase (314 aa).

Residues glutamate 68, glutamate 101, and histidine 104 each coordinate Mn(2+). Residues 71-162 constitute a cross-link (3-(O4'-tyrosyl)-valine (Val-Tyr)); that stretch reads VTEDIQPFMS…AAQVRASVTY (92 aa). Glutamate 101 is a binding site for Fe cation. Fe cation contacts are provided by glutamate 167, glutamate 202, and histidine 205.

It belongs to the ribonucleoside diphosphate reductase small chain family. R2-like ligand binding oxidase subfamily. Homodimer. Fe cation is required as a cofactor. It depends on Mn(2+) as a cofactor.

Its function is as follows. Probable oxidase that might be involved in lipid metabolism. The chain is R2-like ligand binding oxidase from Mycobacterium bovis (strain ATCC BAA-935 / AF2122/97).